The sequence spans 464 residues: Phosphoglucosamine mutase (464 aa).

Ser112 acts as the Phosphoserine intermediate in catalysis. Ser112, Asp252, Asp254, and Asp256 together coordinate Mg(2+). The residue at position 112 (Ser112) is a Phosphoserine.

This sequence belongs to the phosphohexose mutase family. The cofactor is Mg(2+). Post-translationally, activated by phosphorylation.

The enzyme catalyses alpha-D-glucosamine 1-phosphate = D-glucosamine 6-phosphate. In terms of biological role, catalyzes the conversion of glucosamine-6-phosphate to glucosamine-1-phosphate. In Synechococcus sp. (strain CC9605), this protein is Phosphoglucosamine mutase.